The chain runs to 365 residues: Ribosomal RNA large subunit methyltransferase M (365 aa).

S-adenosyl-L-methionine is bound by residues Ser193, Cys226–Gly229, Asp245, Asp265, and Asp282. Lys311 serves as the catalytic Proton acceptor.

The protein belongs to the class I-like SAM-binding methyltransferase superfamily. RNA methyltransferase RlmE family. RlmM subfamily. In terms of assembly, monomer.

The protein resides in the cytoplasm. The enzyme catalyses cytidine(2498) in 23S rRNA + S-adenosyl-L-methionine = 2'-O-methylcytidine(2498) in 23S rRNA + S-adenosyl-L-homocysteine + H(+). Functionally, catalyzes the 2'-O-methylation at nucleotide C2498 in 23S rRNA. This chain is Ribosomal RNA large subunit methyltransferase M, found in Alteromonas mediterranea (strain DSM 17117 / CIP 110805 / LMG 28347 / Deep ecotype).